A 195-amino-acid chain; its full sequence is Imidazoleglycerol-phosphate dehydratase (195 aa).

It belongs to the imidazoleglycerol-phosphate dehydratase family.

The protein localises to the cytoplasm. It carries out the reaction D-erythro-1-(imidazol-4-yl)glycerol 3-phosphate = 3-(imidazol-4-yl)-2-oxopropyl phosphate + H2O. Its pathway is amino-acid biosynthesis; L-histidine biosynthesis; L-histidine from 5-phospho-alpha-D-ribose 1-diphosphate: step 6/9. The chain is Imidazoleglycerol-phosphate dehydratase from Shouchella clausii (strain KSM-K16) (Alkalihalobacillus clausii).